A 76-amino-acid chain; its full sequence is Small ribosomal subunit protein bS18 (76 aa).

This sequence belongs to the bacterial ribosomal protein bS18 family. Part of the 30S ribosomal subunit. Forms a tight heterodimer with protein bS6.

Binds as a heterodimer with protein bS6 to the central domain of the 16S rRNA, where it helps stabilize the platform of the 30S subunit. This chain is Small ribosomal subunit protein bS18, found in Psychrobacter arcticus (strain DSM 17307 / VKM B-2377 / 273-4).